The chain runs to 364 residues: Peptidyl-prolyl cis-trans isomerase D (364 aa).

The PPIase cyclophilin-type domain maps to 7 to 170; it reads YFDITIGNKP…EDAVIAKCGE (164 aa). TPR repeat units follow at residues 208 to 241, 261 to 294, and 301 to 334; these read ATHL…LNEK, IPCY…DSKY, and TKAY…DPED.

It belongs to the cyclophilin-type PPIase family. PPIase D subfamily.

Its subcellular location is the cytoplasm. The enzyme catalyses [protein]-peptidylproline (omega=180) = [protein]-peptidylproline (omega=0). Its function is as follows. PPIases accelerate the folding of proteins. It catalyzes the cis-trans isomerization of proline imidic peptide bonds in oligopeptides. The chain is Peptidyl-prolyl cis-trans isomerase D (cyp12) from Rhizopus delemar (strain RA 99-880 / ATCC MYA-4621 / FGSC 9543 / NRRL 43880) (Mucormycosis agent).